The chain runs to 102 residues: Small ribosomal subunit protein uS10 (102 aa).

It belongs to the universal ribosomal protein uS10 family. As to quaternary structure, part of the 30S ribosomal subunit.

In terms of biological role, involved in the binding of tRNA to the ribosomes. The sequence is that of Small ribosomal subunit protein uS10 from Lactiplantibacillus plantarum (strain ATCC BAA-793 / NCIMB 8826 / WCFS1) (Lactobacillus plantarum).